The primary structure comprises 508 residues: Photosystem II CP47 reaction center protein (508 aa).

6 helical membrane passes run 21–36 (SVHI…WAGS), 101–115 (IVFS…IWHW), 140–156 (GIHL…FGAF), 203–218 (IAAG…FHLS), 237–252 (VLSS…AFVV), and 457–472 (SFAL…HGAR).

The protein belongs to the PsbB/PsbC family. PsbB subfamily. In terms of assembly, PSII is composed of 1 copy each of membrane proteins PsbA, PsbB, PsbC, PsbD, PsbE, PsbF, PsbH, PsbI, PsbJ, PsbK, PsbL, PsbM, PsbT, PsbX, PsbY, PsbZ, Psb30/Ycf12, at least 3 peripheral proteins of the oxygen-evolving complex and a large number of cofactors. It forms dimeric complexes. Requires Binds multiple chlorophylls. PSII binds additional chlorophylls, carotenoids and specific lipids. as cofactor.

It is found in the plastid. The protein resides in the chloroplast thylakoid membrane. In terms of biological role, one of the components of the core complex of photosystem II (PSII). It binds chlorophyll and helps catalyze the primary light-induced photochemical processes of PSII. PSII is a light-driven water:plastoquinone oxidoreductase, using light energy to abstract electrons from H(2)O, generating O(2) and a proton gradient subsequently used for ATP formation. The polypeptide is Photosystem II CP47 reaction center protein (Lactuca sativa (Garden lettuce)).